A 130-amino-acid chain; its full sequence is Protein ApaG (130 aa).

Residues arginine 3–arginine 127 form the ApaG domain.

This chain is Protein ApaG, found in Azorhizobium caulinodans (strain ATCC 43989 / DSM 5975 / JCM 20966 / LMG 6465 / NBRC 14845 / NCIMB 13405 / ORS 571).